Here is a 186-residue protein sequence, read N- to C-terminus: UPF0301 protein NTHI0415 (186 aa).

Belongs to the UPF0301 (AlgH) family.

This Haemophilus influenzae (strain 86-028NP) protein is UPF0301 protein NTHI0415.